The sequence spans 364 residues: tRNA 2-selenouridine synthase (364 aa).

A Rhodanese domain is found at 14 to 137 (LIADTPIIDV…LRQTTIQATI (124 aa)). Cysteine 97 serves as the catalytic S-selanylcysteine intermediate.

Belongs to the SelU family. Monomer.

The catalysed reaction is 5-methylaminomethyl-2-thiouridine(34) in tRNA + selenophosphate + (2E)-geranyl diphosphate + H2O + H(+) = 5-methylaminomethyl-2-selenouridine(34) in tRNA + (2E)-thiogeraniol + phosphate + diphosphate. It catalyses the reaction 5-methylaminomethyl-2-thiouridine(34) in tRNA + (2E)-geranyl diphosphate = 5-methylaminomethyl-S-(2E)-geranyl-thiouridine(34) in tRNA + diphosphate. The enzyme catalyses 5-methylaminomethyl-S-(2E)-geranyl-thiouridine(34) in tRNA + selenophosphate + H(+) = 5-methylaminomethyl-2-(Se-phospho)selenouridine(34) in tRNA + (2E)-thiogeraniol. It carries out the reaction 5-methylaminomethyl-2-(Se-phospho)selenouridine(34) in tRNA + H2O = 5-methylaminomethyl-2-selenouridine(34) in tRNA + phosphate. Involved in the post-transcriptional modification of the uridine at the wobble position (U34) of tRNA(Lys), tRNA(Glu) and tRNA(Gln). Catalyzes the conversion of 2-thiouridine (S2U-RNA) to 2-selenouridine (Se2U-RNA). Acts in a two-step process involving geranylation of 2-thiouridine (S2U) to S-geranyl-2-thiouridine (geS2U) and subsequent selenation of the latter derivative to 2-selenouridine (Se2U) in the tRNA chain. The sequence is that of tRNA 2-selenouridine synthase from Escherichia coli O139:H28 (strain E24377A / ETEC).